Consider the following 332-residue polypeptide: Cell division protein ZipA (332 aa).

At 1–6 (MMQDLR) the chain is on the periplasmic side. A helical transmembrane segment spans residues 7 to 27 (LILIVVGAIAIIALLLHGLWT). Over 28–332 (SRKERSSLFR…RIRDVLKANA (305 aa)) the chain is Cytoplasmic. The segment covering 40–51 (PVKRAKKARDET) has biased composition (basic and acidic residues). The tract at residues 40 to 189 (PVKRAKKARD…VQPAPQQPAE (150 aa)) is disordered. A compositionally biased stretch (low complexity) spans 76–88 (SFDSASVDSSSFD). The span at 93-105 (AREDVRSEAKSPF) shows a compositional bias: basic and acidic residues.

Belongs to the ZipA family. In terms of assembly, interacts with FtsZ via their C-terminal domains.

It localises to the cell inner membrane. In terms of biological role, essential cell division protein that stabilizes the FtsZ protofilaments by cross-linking them and that serves as a cytoplasmic membrane anchor for the Z ring. Also required for the recruitment to the septal ring of downstream cell division proteins. The protein is Cell division protein ZipA of Pectobacterium atrosepticum (strain SCRI 1043 / ATCC BAA-672) (Erwinia carotovora subsp. atroseptica).